The sequence spans 83 residues: ATP synthase subunit c (83 aa).

2 consecutive transmembrane segments (helical) span residues 10 to 30 and 52 to 72; these read IAVA…FGLL and MFIV…IALY.

This sequence belongs to the ATPase C chain family. In terms of assembly, F-type ATPases have 2 components, F(1) - the catalytic core - and F(0) - the membrane proton channel. F(1) has five subunits: alpha(3), beta(3), gamma(1), delta(1), epsilon(1). F(0) has three main subunits: a(1), b(2) and c(10-14). The alpha and beta chains form an alternating ring which encloses part of the gamma chain. F(1) is attached to F(0) by a central stalk formed by the gamma and epsilon chains, while a peripheral stalk is formed by the delta and b chains.

The protein localises to the cell inner membrane. F(1)F(0) ATP synthase produces ATP from ADP in the presence of a proton or sodium gradient. F-type ATPases consist of two structural domains, F(1) containing the extramembraneous catalytic core and F(0) containing the membrane proton channel, linked together by a central stalk and a peripheral stalk. During catalysis, ATP synthesis in the catalytic domain of F(1) is coupled via a rotary mechanism of the central stalk subunits to proton translocation. Its function is as follows. Key component of the F(0) channel; it plays a direct role in translocation across the membrane. A homomeric c-ring of between 10-14 subunits forms the central stalk rotor element with the F(1) delta and epsilon subunits. This Shewanella denitrificans (strain OS217 / ATCC BAA-1090 / DSM 15013) protein is ATP synthase subunit c.